The primary structure comprises 252 residues: Triosephosphate isomerase (252 aa).

Asparagine 9–lysine 11 lines the substrate pocket. Histidine 100 functions as the Electrophile in the catalytic mechanism. The Proton acceptor role is filled by glutamate 171. Substrate-binding positions include glycine 177, serine 216, and glycine 237–glycine 238.

Belongs to the triosephosphate isomerase family. In terms of assembly, homodimer.

The protein localises to the cytoplasm. The catalysed reaction is D-glyceraldehyde 3-phosphate = dihydroxyacetone phosphate. It functions in the pathway carbohydrate biosynthesis; gluconeogenesis. Its pathway is carbohydrate degradation; glycolysis; D-glyceraldehyde 3-phosphate from glycerone phosphate: step 1/1. Its function is as follows. Involved in the gluconeogenesis. Catalyzes stereospecifically the conversion of dihydroxyacetone phosphate (DHAP) to D-glyceraldehyde-3-phosphate (G3P). The sequence is that of Triosephosphate isomerase from Polynucleobacter necessarius subsp. necessarius (strain STIR1).